The following is a 367-amino-acid chain: 3-dehydroquinate synthase (367 aa).

NAD(+)-binding positions include 99–103 (GVVGD), 123–124 (TT), K136, K145, and 163–166 (FLRT). Residues E178, H242, and H259 each contribute to the Zn(2+) site.

The protein belongs to the sugar phosphate cyclases superfamily. Dehydroquinate synthase family. Requires Co(2+) as cofactor. Zn(2+) serves as cofactor. The cofactor is NAD(+).

It localises to the cytoplasm. The catalysed reaction is 7-phospho-2-dehydro-3-deoxy-D-arabino-heptonate = 3-dehydroquinate + phosphate. Its pathway is metabolic intermediate biosynthesis; chorismate biosynthesis; chorismate from D-erythrose 4-phosphate and phosphoenolpyruvate: step 2/7. In terms of biological role, catalyzes the conversion of 3-deoxy-D-arabino-heptulosonate 7-phosphate (DAHP) to dehydroquinate (DHQ). This is 3-dehydroquinate synthase from Chlorobaculum parvum (strain DSM 263 / NCIMB 8327) (Chlorobium vibrioforme subsp. thiosulfatophilum).